Here is a 500-residue protein sequence, read N- to C-terminus: NADH-quinone oxidoreductase subunit N (500 aa).

14 helical membrane-spanning segments follow: residues 13–33 (VMMPEFIILGVAVALSLIDLF), 42–62 (LLGLFAFVGIAVSFVSLLSLW), 79–99 (FAKSFKALLLIGSALVLLLSI), 111–131 (GEFYYLFLTALLGAMMMASSG), 133–153 (LITLFVGLELLSISSYILVAI), 168–188 (VITGSIATAITLFGMSYIFGF), 211–231 (YVLSLAFLLTFVGLSFKLASA), 245–265 (TTPVVSFLSVVSKTAGFVIVL), 281–301 (ASMLMTFAPYIAFLSGATMII), 321–341 (VAHAGYVLVAFASLSMFMFEA), 342–362 (IWFYLLAYVFMTIGAFAILQV), 386–406 (AIAMTIFLLSLAGIPGTAGFI), 424–444 (VLASIMVITTIISYVYYFGIF), and 461–481 (PPGVIAVVVICVIGTVLLGVF).

It belongs to the complex I subunit 2 family. NDH-1 is composed of 14 different subunits. Subunits NuoA, H, J, K, L, M, N constitute the membrane sector of the complex.

The protein localises to the cell membrane. The catalysed reaction is a quinone + NADH + 5 H(+)(in) = a quinol + NAD(+) + 4 H(+)(out). In terms of biological role, NDH-1 shuttles electrons from NADH, via FMN and iron-sulfur (Fe-S) centers, to quinones in the respiratory chain. The immediate electron acceptor for the enzyme in this species is believed to be a menaquinone. Couples the redox reaction to proton translocation (for every two electrons transferred, four hydrogen ions are translocated across the cytoplasmic membrane), and thus conserves the redox energy in a proton gradient. The polypeptide is NADH-quinone oxidoreductase subunit N (Anoxybacillus flavithermus (strain DSM 21510 / WK1)).